Here is a 147-residue protein sequence, read N- to C-terminus: Anti-sigma F factor (147 aa).

It belongs to the anti-sigma-factor family.

The enzyme catalyses L-seryl-[protein] + ATP = O-phospho-L-seryl-[protein] + ADP + H(+). The catalysed reaction is L-threonyl-[protein] + ATP = O-phospho-L-threonyl-[protein] + ADP + H(+). Binds to sigma F and blocks its ability to form an RNA polymerase holoenzyme (E-sigma F). Phosphorylates SpoIIAA on a serine residue. This phosphorylation may enable SpoIIAA to act as an anti-anti-sigma factor that counteracts SpoIIAB and thus releases sigma F from inhibition. In Priestia megaterium (Bacillus megaterium), this protein is Anti-sigma F factor.